The sequence spans 113 residues: Large ribosomal subunit protein uL22 (113 aa).

The protein belongs to the universal ribosomal protein uL22 family. As to quaternary structure, part of the 50S ribosomal subunit.

In terms of biological role, this protein binds specifically to 23S rRNA; its binding is stimulated by other ribosomal proteins, e.g. L4, L17, and L20. It is important during the early stages of 50S assembly. It makes multiple contacts with different domains of the 23S rRNA in the assembled 50S subunit and ribosome. Functionally, the globular domain of the protein is located near the polypeptide exit tunnel on the outside of the subunit, while an extended beta-hairpin is found that lines the wall of the exit tunnel in the center of the 70S ribosome. This is Large ribosomal subunit protein uL22 from Desulforamulus reducens (strain ATCC BAA-1160 / DSM 100696 / MI-1) (Desulfotomaculum reducens).